A 262-amino-acid polypeptide reads, in one-letter code: Putative 1-acyl-sn-glycerol-3-phosphate acyltransferase acl-1 (262 aa).

The next 3 helical transmembrane spans lie at 3 to 23, 29 to 49, and 89 to 109; these read FLAI…PVIG, VYFG…SIPF, and IIIA…AWPV. Residues 94–99 carry the HXXXXD motif motif; it reads HQSALD.

Belongs to the 1-acyl-sn-glycerol-3-phosphate acyltransferase family.

The protein localises to the membrane. The catalysed reaction is a 1-acyl-sn-glycero-3-phosphate + an acyl-CoA = a 1,2-diacyl-sn-glycero-3-phosphate + CoA. Its pathway is phospholipid metabolism; CDP-diacylglycerol biosynthesis; CDP-diacylglycerol from sn-glycerol 3-phosphate: step 2/3. In terms of biological role, converts lysophosphatidic acid (LPA) into phosphatidic acid by incorporating an acyl moiety at the sn-2 position of the glycerol backbone. The protein is Putative 1-acyl-sn-glycerol-3-phosphate acyltransferase acl-1 (acl-1) of Caenorhabditis elegans.